A 359-amino-acid polypeptide reads, in one-letter code: DNA replication and repair protein RecF (359 aa).

30 to 37 is a binding site for ATP; it reads GANGSGKT.

Belongs to the RecF family.

Its subcellular location is the cytoplasm. Functionally, the RecF protein is involved in DNA metabolism; it is required for DNA replication and normal SOS inducibility. RecF binds preferentially to single-stranded, linear DNA. It also seems to bind ATP. This is DNA replication and repair protein RecF from Vibrio atlanticus (strain LGP32) (Vibrio splendidus (strain Mel32)).